Consider the following 113-residue polypeptide: Hydrogenase maturation factor HybF (113 aa).

Residues histidine 2 and glutamate 3 each coordinate Ni(2+). Cysteine 73, cysteine 76, cysteine 89, and cysteine 92 together coordinate Zn(2+).

This sequence belongs to the HypA/HybF family. HybF subfamily.

Functionally, involved in the maturation of [NiFe] hydrogenases. Required for nickel insertion into the metal center of the hydrogenase. In Escherichia coli O6:H1 (strain CFT073 / ATCC 700928 / UPEC), this protein is Hydrogenase maturation factor HybF.